The chain runs to 40 residues: Photosystem II reaction center protein J (40 aa).

A helical transmembrane segment spans residues 8-28 (IPLWLVGTVTGIPVIGLIGVF).

Belongs to the PsbJ family. As to quaternary structure, PSII is composed of 1 copy each of membrane proteins PsbA, PsbB, PsbC, PsbD, PsbE, PsbF, PsbH, PsbI, PsbJ, PsbK, PsbL, PsbM, PsbT, PsbX, PsbY, PsbZ, Psb30/Ycf12, at least 3 peripheral proteins of the oxygen-evolving complex and a large number of cofactors. It forms dimeric complexes.

It localises to the plastid. It is found in the chloroplast thylakoid membrane. Its function is as follows. One of the components of the core complex of photosystem II (PSII). PSII is a light-driven water:plastoquinone oxidoreductase that uses light energy to abstract electrons from H(2)O, generating O(2) and a proton gradient subsequently used for ATP formation. It consists of a core antenna complex that captures photons, and an electron transfer chain that converts photonic excitation into a charge separation. The chain is Photosystem II reaction center protein J from Musa acuminata (Banana).